We begin with the raw amino-acid sequence, 133 residues long: Small ribosomal subunit protein uS8 (133 aa).

It belongs to the universal ribosomal protein uS8 family. Part of the 30S ribosomal subunit.

Functionally, one of the primary rRNA binding proteins, it binds directly to 16S rRNA central domain where it helps coordinate assembly of the platform of the 30S subunit. The sequence is that of Small ribosomal subunit protein uS8 from Metallosphaera sedula (strain ATCC 51363 / DSM 5348 / JCM 9185 / NBRC 15509 / TH2).